A 458-amino-acid polypeptide reads, in one-letter code: Bifunctional protein GlmU (458 aa).

The interval 1–229 (MKEKALSIVI…FMEVEGVNNR (229 aa)) is pyrophosphorylase. UDP-N-acetyl-alpha-D-glucosamine contacts are provided by residues 11–14 (LAAG), K25, Q76, 81–82 (GT), 103–105 (YGD), G140, E154, N169, and N227. Position 105 (D105) interacts with Mg(2+). N227 provides a ligand contact to Mg(2+). The interval 230-250 (QQLARLERYYQRKQADNLLLA) is linker. The tract at residues 251–458 (GVALADPERF…WQRPTKQTKK (208 aa)) is N-acetyltransferase. The UDP-N-acetyl-alpha-D-glucosamine site is built by R333 and K351. Residue H363 is the Proton acceptor of the active site. Positions 366 and 377 each coordinate UDP-N-acetyl-alpha-D-glucosamine. Residues A380, 386–387 (NY), S405, A423, and R440 each bind acetyl-CoA.

It in the N-terminal section; belongs to the N-acetylglucosamine-1-phosphate uridyltransferase family. In the C-terminal section; belongs to the transferase hexapeptide repeat family. As to quaternary structure, homotrimer. Mg(2+) is required as a cofactor.

The protein localises to the cytoplasm. The catalysed reaction is alpha-D-glucosamine 1-phosphate + acetyl-CoA = N-acetyl-alpha-D-glucosamine 1-phosphate + CoA + H(+). It carries out the reaction N-acetyl-alpha-D-glucosamine 1-phosphate + UTP + H(+) = UDP-N-acetyl-alpha-D-glucosamine + diphosphate. It participates in nucleotide-sugar biosynthesis; UDP-N-acetyl-alpha-D-glucosamine biosynthesis; N-acetyl-alpha-D-glucosamine 1-phosphate from alpha-D-glucosamine 6-phosphate (route II): step 2/2. It functions in the pathway nucleotide-sugar biosynthesis; UDP-N-acetyl-alpha-D-glucosamine biosynthesis; UDP-N-acetyl-alpha-D-glucosamine from N-acetyl-alpha-D-glucosamine 1-phosphate: step 1/1. The protein operates within bacterial outer membrane biogenesis; LPS lipid A biosynthesis. In terms of biological role, catalyzes the last two sequential reactions in the de novo biosynthetic pathway for UDP-N-acetylglucosamine (UDP-GlcNAc). The C-terminal domain catalyzes the transfer of acetyl group from acetyl coenzyme A to glucosamine-1-phosphate (GlcN-1-P) to produce N-acetylglucosamine-1-phosphate (GlcNAc-1-P), which is converted into UDP-GlcNAc by the transfer of uridine 5-monophosphate (from uridine 5-triphosphate), a reaction catalyzed by the N-terminal domain. This Pasteurella multocida (strain Pm70) protein is Bifunctional protein GlmU.